A 211-amino-acid polypeptide reads, in one-letter code: Protein-L-isoaspartate O-methyltransferase (211 aa).

The active site involves Ser60.

This sequence belongs to the methyltransferase superfamily. L-isoaspartyl/D-aspartyl protein methyltransferase family.

It is found in the cytoplasm. The catalysed reaction is [protein]-L-isoaspartate + S-adenosyl-L-methionine = [protein]-L-isoaspartate alpha-methyl ester + S-adenosyl-L-homocysteine. Its function is as follows. Catalyzes the methyl esterification of L-isoaspartyl residues in peptides and proteins that result from spontaneous decomposition of normal L-aspartyl and L-asparaginyl residues. It plays a role in the repair and/or degradation of damaged proteins. This chain is Protein-L-isoaspartate O-methyltransferase, found in Alteromonas mediterranea (strain DSM 17117 / CIP 110805 / LMG 28347 / Deep ecotype).